The sequence spans 357 residues: Scopoletin 8-hydroxylase (357 aa).

One can recognise a Fe2OG dioxygenase domain in the interval 206-307; it reads MGTKMVNMNY…RVSVPIFTAP (102 aa). Tyr-216 contributes to the 2-oxoglutarate binding site. The Fe cation site is built by His-231, Asp-233, and His-288. The 2-oxoglutarate site is built by Arg-298 and Ser-300.

This sequence belongs to the iron/ascorbate-dependent oxidoreductase family. L-ascorbate is required as a cofactor. It depends on Fe(2+) as a cofactor. Expressed in both primary and lateral roots under iron-deficient conditions, except in apical root zones, and mostly in the root epidermal layer.

The catalysed reaction is scopoletin + 2-oxoglutarate + O2 = fraxetin + succinate + CO2. Its pathway is phenylpropanoid metabolism. Involved in the pathway of sideretin biosynthesis from feruloyl CoA, a redox-active catecholic metabolite exuded by roots in response to iron deficiency in order to facilitate the uptake of iron; this pathway consists in the successive conversion from feruloyl CoA to scopoletin, from scopoletin to fraxetin and from fraxetin to sideretin. Catalyzes the biosynthesis of fraxetin via scopoletin hydroxylation. This Arabidopsis thaliana (Mouse-ear cress) protein is Scopoletin 8-hydroxylase.